A 214-amino-acid polypeptide reads, in one-letter code: Cytochrome b (214 aa).

Helical transmembrane passes span 31–51, 75–96, 111–131, and 176–196; these read FGSMLLSCLMIQIATGFFLAI, WIMQNTHAIGASLFFICIYIHI, WLSGTTLLIILMATAFFGYVL, and FFALHFILPFAIISLSSLHIL. Residues histidine 81 and histidine 95 each coordinate heme b. Positions 180 and 194 each coordinate heme b. Histidine 199 is an a ubiquinone binding site.

The protein belongs to the cytochrome b family. The cytochrome bc1 complex contains 3 respiratory subunits (MT-CYB, CYC1 and UQCRFS1), 2 core proteins (UQCRC1 and UQCRC2) and probably 6 low-molecular weight proteins. Requires heme b as cofactor.

It localises to the mitochondrion inner membrane. In terms of biological role, component of the ubiquinol-cytochrome c reductase complex (complex III or cytochrome b-c1 complex) that is part of the mitochondrial respiratory chain. The b-c1 complex mediates electron transfer from ubiquinol to cytochrome c. Contributes to the generation of a proton gradient across the mitochondrial membrane that is then used for ATP synthesis. In Crotalus atrox (Western diamondback rattlesnake), this protein is Cytochrome b (MT-CYB).